A 394-amino-acid polypeptide reads, in one-letter code: uncharacterized protein (394 aa).

The next 11 membrane-spanning stretches (helical) occupy residues 10–30 (PALI…NYYA), 50–70 (FIVT…VPLG), 79–99 (IVSM…SQSL), 100–120 (AMMI…QILV), 138–158 (TIMS…GLLA), 166–186 (VFWV…RGLP), 218–238 (LLGC…AFLL), 243–263 (FNYS…GALG), 291–311 (WLAI…ILVL), 337–357 (LTAG…LISA), and 364–384 (GWAG…LVWW).

This sequence belongs to the major facilitator superfamily.

Its subcellular location is the cell inner membrane. This is an uncharacterized protein from Escherichia coli (strain K12).